We begin with the raw amino-acid sequence, 750 residues long: Photosystem I P700 chlorophyll a apoprotein A1 (750 aa).

8 consecutive transmembrane segments (helical) span residues 70–93 (VFSAHFGQLAIILIWLSGMYFHGA), 156–179 (LYCTAIGALIFAGLMLFAGWFHYH), 195–219 (LNHHLAGLLGLGSLGWAGHQVHVSL), 291–309 (TAHHHLAIGVLFLVAGHMY), 346–369 (WHAQLALNLAMLGSLTIIVAHHMY), 385–411 (LSLFTHHMWIGGFLVVGAAAHAAIFMV), 433–455 (AIISHLNWVCIFLGFHSFGLYIH), and 531–549 (FLVHHIHAFTIHVTVLILL). The [4Fe-4S] cluster site is built by C573 and C582. Transmembrane regions (helical) follow at residues 589–610 (HVFLGLFWMYNSISIVIFHFSW) and 664–686 (LSAYGLLFLGAHFVWAFSLMFLF). H675 contributes to the chlorophyll a' binding site. M683 and Y691 together coordinate chlorophyll a. A phylloquinone-binding site is contributed by W692. Residues 724–744 (AVGVAHYLLGGIATTWAFFLA) traverse the membrane as a helical segment.

The protein belongs to the PsaA/PsaB family. In terms of assembly, the PsaA/B heterodimer binds the P700 chlorophyll special pair and subsequent electron acceptors. PSI consists of a core antenna complex that captures photons, and an electron transfer chain that converts photonic excitation into a charge separation. The eukaryotic PSI reaction center is composed of at least 11 subunits. P700 is a chlorophyll a/chlorophyll a' dimer, A0 is one or more chlorophyll a, A1 is one or both phylloquinones and FX is a shared 4Fe-4S iron-sulfur center. is required as a cofactor.

Its subcellular location is the plastid. It is found in the chloroplast thylakoid membrane. The enzyme catalyses reduced [plastocyanin] + hnu + oxidized [2Fe-2S]-[ferredoxin] = oxidized [plastocyanin] + reduced [2Fe-2S]-[ferredoxin]. In terms of biological role, psaA and PsaB bind P700, the primary electron donor of photosystem I (PSI), as well as the electron acceptors A0, A1 and FX. PSI is a plastocyanin-ferredoxin oxidoreductase, converting photonic excitation into a charge separation, which transfers an electron from the donor P700 chlorophyll pair to the spectroscopically characterized acceptors A0, A1, FX, FA and FB in turn. Oxidized P700 is reduced on the lumenal side of the thylakoid membrane by plastocyanin. The polypeptide is Photosystem I P700 chlorophyll a apoprotein A1 (Angiopteris evecta (Mule's foot fern)).